The chain runs to 256 residues: Imidazole glycerol phosphate synthase subunit HisF (256 aa).

Active-site residues include Asp-12 and Asp-131.

It belongs to the HisA/HisF family. Heterodimer of HisH and HisF.

It localises to the cytoplasm. The catalysed reaction is 5-[(5-phospho-1-deoxy-D-ribulos-1-ylimino)methylamino]-1-(5-phospho-beta-D-ribosyl)imidazole-4-carboxamide + L-glutamine = D-erythro-1-(imidazol-4-yl)glycerol 3-phosphate + 5-amino-1-(5-phospho-beta-D-ribosyl)imidazole-4-carboxamide + L-glutamate + H(+). It participates in amino-acid biosynthesis; L-histidine biosynthesis; L-histidine from 5-phospho-alpha-D-ribose 1-diphosphate: step 5/9. In terms of biological role, IGPS catalyzes the conversion of PRFAR and glutamine to IGP, AICAR and glutamate. The HisF subunit catalyzes the cyclization activity that produces IGP and AICAR from PRFAR using the ammonia provided by the HisH subunit. The protein is Imidazole glycerol phosphate synthase subunit HisF of Micrococcus luteus (strain ATCC 4698 / DSM 20030 / JCM 1464 / CCM 169 / CCUG 5858 / IAM 1056 / NBRC 3333 / NCIMB 9278 / NCTC 2665 / VKM Ac-2230) (Micrococcus lysodeikticus).